The chain runs to 238 residues: Expansin-like protein 5 (238 aa).

The signal sequence occupies residues 1 to 21 (MRINFKLILIILTSFYGIINC). The region spanning 45–145 (NGNCGFGKLT…VKVPCRVSGN (101 aa)) is the Expansin-like EG45 domain. 2 disulfide bridges follow: Cys48/Cys78 and Cys81/Cys140. N-linked (GlcNAc...) asparagine glycosylation occurs at Asn89.

The protein belongs to the expansin family. Expansin A subfamily.

The protein localises to the secreted. Functionally, may serve to lubricate the movement of the cellulose microfibrils during cell growth and wall extension and/or may serve to maintain the fluid state of the slug cell wall. This is Expansin-like protein 5 (expl5) from Dictyostelium discoideum (Social amoeba).